The primary structure comprises 411 residues: CCA-adding enzyme (411 aa).

ATP-binding residues include glycine 8 and arginine 11. Glycine 8 and arginine 11 together coordinate CTP. Positions 21 and 23 each coordinate Mg(2+). ATP is bound by residues arginine 91, arginine 137, and arginine 140. Residues arginine 91, arginine 137, and arginine 140 each coordinate CTP. In terms of domain architecture, HD spans 227-328; it reads LGNQTMTRLS…MTIFQAFDCW (102 aa).

The protein belongs to the tRNA nucleotidyltransferase/poly(A) polymerase family. Bacterial CCA-adding enzyme type 2 subfamily. Requires Mg(2+) as cofactor.

It carries out the reaction a tRNA precursor + 2 CTP + ATP = a tRNA with a 3' CCA end + 3 diphosphate. The catalysed reaction is a tRNA with a 3' CCA end + 2 CTP + ATP = a tRNA with a 3' CCACCA end + 3 diphosphate. Catalyzes the addition and repair of the essential 3'-terminal CCA sequence in tRNAs without using a nucleic acid template. Adds these three nucleotides in the order of C, C, and A to the tRNA nucleotide-73, using CTP and ATP as substrates and producing inorganic pyrophosphate. tRNA 3'-terminal CCA addition is required both for tRNA processing and repair. Also involved in tRNA surveillance by mediating tandem CCA addition to generate a CCACCA at the 3' terminus of unstable tRNAs. While stable tRNAs receive only 3'-terminal CCA, unstable tRNAs are marked with CCACCA and rapidly degraded. This Blochmanniella floridana protein is CCA-adding enzyme.